Reading from the N-terminus, the 79-residue chain is Cell division protein ZapB (79 aa).

Residues 3–79 are a coiled coil; sequence LEVFEKLEAK…QALLGRMEEV (77 aa). The residue at position 8 (Lys8) is an N6-acetyllysine. A disordered region spans residues 34–65; it reads NNSLSQEVQNAQHQREELERENNHLKEQQNGW. Positions 35–45 are enriched in polar residues; that stretch reads NSLSQEVQNAQ. Positions 46–60 are enriched in basic and acidic residues; it reads HQREELERENNHLKE.

This sequence belongs to the ZapB family. As to quaternary structure, homodimer. The ends of the coiled-coil dimer bind to each other, forming polymers. Interacts with FtsZ.

The protein resides in the cytoplasm. Non-essential, abundant cell division factor that is required for proper Z-ring formation. It is recruited early to the divisome by direct interaction with FtsZ, stimulating Z-ring assembly and thereby promoting cell division earlier in the cell cycle. Its recruitment to the Z-ring requires functional FtsA or ZipA. This is Cell division protein ZapB from Shigella boydii serotype 18 (strain CDC 3083-94 / BS512).